The primary structure comprises 711 residues: Polyribonucleotide nucleotidyltransferase (711 aa).

Mg(2+)-binding residues include Asp486 and Asp492. The KH domain occupies 553–612 (PRIHTIKISTDKIKDVIGKGGSVIRALTEETGTTIEIEDDGTVKIAATDGEKAKYAIRRI). An S1 motif domain is found at 622–690 (GRIYNGKVTR…RQGRVRLSIK (69 aa)). Positions 690 to 711 (KEATEQSQPAAAPEAPASEQAE) are disordered. Residues 694-711 (EQSQPAAAPEAPASEQAE) are compositionally biased toward low complexity.

This sequence belongs to the polyribonucleotide nucleotidyltransferase family. Component of the RNA degradosome, which is a multiprotein complex involved in RNA processing and mRNA degradation. Requires Mg(2+) as cofactor.

It localises to the cytoplasm. It carries out the reaction RNA(n+1) + phosphate = RNA(n) + a ribonucleoside 5'-diphosphate. Involved in mRNA degradation. Catalyzes the phosphorolysis of single-stranded polyribonucleotides processively in the 3'- to 5'-direction. The protein is Polyribonucleotide nucleotidyltransferase of Salmonella choleraesuis (strain SC-B67).